The chain runs to 329 residues: Protein phosphatase 1 regulatory subunit 42 (329 aa).

LRR repeat units follow at residues lysine 30–arginine 51, asparagine 52–serine 73, asparagine 74–histidine 95, lysine 96–lysine 117, serine 118–proline 139, threonine 148–arginine 169, and lysine 170–phenylalanine 191. The 39-residue stretch at asparagine 205–tryptophan 243 folds into the LRRCT domain. A disordered region spans residues serine 268 to isoleucine 329. The span at glycine 318 to isoleucine 329 shows a compositional bias: polar residues.

The protein localises to the cytoplasm. It is found in the cytoskeleton. Its subcellular location is the microtubule organizing center. The protein resides in the centrosome. May regulate phosphatase activity of protein phosphatase 1 (PP1) complexes. The sequence is that of Protein phosphatase 1 regulatory subunit 42 (ppp1r42) from Danio rerio (Zebrafish).